The chain runs to 573 residues: Protein FAM200A (573 aa).

Residues 1–51 (MTPESRDTTDLSPRGTQEMEGIVVVKVEEEDEEDHFQKQRNKVESSPQVLS) are disordered. The Extracellular portion of the chain corresponds to 1–513 (MTPESRDTTD…DEFPLLSRKS (513 aa)). The chain crosses the membrane as a helical span at residues 514 to 533 (ISLLLPFTTTYLCELGFSIL). At 534–573 (TRLKTKKRNRLNSAPDMRVALSSCVPDWKELMNRQAHPSH) the chain is on the cytoplasmic side.

Belongs to the FAM200 family.

The protein localises to the membrane. The sequence is that of Protein FAM200A (FAM200A) from Macaca fascicularis (Crab-eating macaque).